The primary structure comprises 475 residues: Glutamyl-tRNA(Gln) amidotransferase subunit A (475 aa).

Catalysis depends on charge relay system residues lysine 69 and serine 144. Serine 168 acts as the Acyl-ester intermediate in catalysis.

It belongs to the amidase family. GatA subfamily. In terms of assembly, heterotrimer of A, B and C subunits.

It carries out the reaction L-glutamyl-tRNA(Gln) + L-glutamine + ATP + H2O = L-glutaminyl-tRNA(Gln) + L-glutamate + ADP + phosphate + H(+). Allows the formation of correctly charged Gln-tRNA(Gln) through the transamidation of misacylated Glu-tRNA(Gln) in organisms which lack glutaminyl-tRNA synthetase. The reaction takes place in the presence of glutamine and ATP through an activated gamma-phospho-Glu-tRNA(Gln). This Methanococcoides burtonii (strain DSM 6242 / NBRC 107633 / OCM 468 / ACE-M) protein is Glutamyl-tRNA(Gln) amidotransferase subunit A.